The chain runs to 456 residues: Bifunctional protein GlmU (456 aa).

Residues 1–229 (MSNRPMSVVI…TTETDGVNNR (229 aa)) form a pyrophosphorylase region. UDP-N-acetyl-alpha-D-glucosamine is bound by residues 11-14 (LAAG), Lys-25, Gln-76, 81-82 (GT), 103-105 (YGD), Gly-140, Glu-154, Asn-169, and Asn-227. Asp-105 serves as a coordination point for Mg(2+). A Mg(2+)-binding site is contributed by Asn-227. The linker stretch occupies residues 230–250 (LQLATLERVYQAEQAEKLLLS). The segment at 251 to 456 (GVMLQDPARF…ASWQRPQKKK (206 aa)) is N-acetyltransferase. Positions 333 and 351 each coordinate UDP-N-acetyl-alpha-D-glucosamine. His-363 acts as the Proton acceptor in catalysis. Residues Tyr-366 and Asn-377 each contribute to the UDP-N-acetyl-alpha-D-glucosamine site. Residues Ala-380, 386–387 (NY), Ser-405, Ala-423, and Arg-440 each bind acetyl-CoA.

This sequence in the N-terminal section; belongs to the N-acetylglucosamine-1-phosphate uridyltransferase family. The protein in the C-terminal section; belongs to the transferase hexapeptide repeat family. Homotrimer. It depends on Mg(2+) as a cofactor.

The protein localises to the cytoplasm. The catalysed reaction is alpha-D-glucosamine 1-phosphate + acetyl-CoA = N-acetyl-alpha-D-glucosamine 1-phosphate + CoA + H(+). It catalyses the reaction N-acetyl-alpha-D-glucosamine 1-phosphate + UTP + H(+) = UDP-N-acetyl-alpha-D-glucosamine + diphosphate. It participates in nucleotide-sugar biosynthesis; UDP-N-acetyl-alpha-D-glucosamine biosynthesis; N-acetyl-alpha-D-glucosamine 1-phosphate from alpha-D-glucosamine 6-phosphate (route II): step 2/2. The protein operates within nucleotide-sugar biosynthesis; UDP-N-acetyl-alpha-D-glucosamine biosynthesis; UDP-N-acetyl-alpha-D-glucosamine from N-acetyl-alpha-D-glucosamine 1-phosphate: step 1/1. Its pathway is bacterial outer membrane biogenesis; LPS lipid A biosynthesis. Its function is as follows. Catalyzes the last two sequential reactions in the de novo biosynthetic pathway for UDP-N-acetylglucosamine (UDP-GlcNAc). The C-terminal domain catalyzes the transfer of acetyl group from acetyl coenzyme A to glucosamine-1-phosphate (GlcN-1-P) to produce N-acetylglucosamine-1-phosphate (GlcNAc-1-P), which is converted into UDP-GlcNAc by the transfer of uridine 5-monophosphate (from uridine 5-triphosphate), a reaction catalyzed by the N-terminal domain. This is Bifunctional protein GlmU from Erwinia tasmaniensis (strain DSM 17950 / CFBP 7177 / CIP 109463 / NCPPB 4357 / Et1/99).